The following is a 396-amino-acid chain: Elongation factor Tu (396 aa).

The tr-type G domain occupies 11–205; the sequence is KPHVNIGTIG…VIDEYIPTPV (195 aa). A G1 region spans residues 20–27; it reads GHVDHGKT. 20 to 27 is a binding site for GTP; the sequence is GHVDHGKT. Mg(2+) is bound at residue T27. A G2 region spans residues 61–65; sequence GITIN. Residues 82 to 85 form a G3 region; it reads DAPG. Residues 82–86 and 137–140 contribute to the GTP site; these read DAPGH and NKTD. Positions 137–140 are G4; it reads NKTD. The tract at residues 175 to 177 is G5; that stretch reads SAL.

Belongs to the TRAFAC class translation factor GTPase superfamily. Classic translation factor GTPase family. EF-Tu/EF-1A subfamily. Monomer.

It localises to the cytoplasm. The catalysed reaction is GTP + H2O = GDP + phosphate + H(+). GTP hydrolase that promotes the GTP-dependent binding of aminoacyl-tRNA to the A-site of ribosomes during protein biosynthesis. In Oenococcus oeni (strain ATCC BAA-331 / PSU-1), this protein is Elongation factor Tu.